A 196-amino-acid chain; its full sequence is ATP-dependent Clp protease proteolytic subunit (196 aa).

Catalysis depends on S101, which acts as the Nucleophile. H126 is a catalytic residue.

The protein belongs to the peptidase S14 family. Component of the chloroplastic Clp protease core complex.

It is found in the plastid. The protein resides in the chloroplast stroma. It catalyses the reaction Hydrolysis of proteins to small peptides in the presence of ATP and magnesium. alpha-casein is the usual test substrate. In the absence of ATP, only oligopeptides shorter than five residues are hydrolyzed (such as succinyl-Leu-Tyr-|-NHMec, and Leu-Tyr-Leu-|-Tyr-Trp, in which cleavage of the -Tyr-|-Leu- and -Tyr-|-Trp bonds also occurs).. Cleaves peptides in various proteins in a process that requires ATP hydrolysis. Has a chymotrypsin-like activity. Plays a major role in the degradation of misfolded proteins. This is ATP-dependent Clp protease proteolytic subunit from Coffea arabica (Arabian coffee).